The following is a 574-amino-acid chain: Hyaluronan synthase 3 (574 aa).

Residues 1–15 (MPVSLSTALRVVGTS) are Cytoplasmic-facing. A helical transmembrane segment spans residues 16-36 (LFALAVLGGILAAYVTGYQFI). Over 37–44 (HTEKHYLS) the chain is Extracellular. Residues 45-65 (FGLYGAILGLHLFIQSLFAFL) form a helical membrane-spanning segment. Residues 66–398 (EHRRMRAERQ…NALWFHKHHL (333 aa)) lie on the Cytoplasmic side of the membrane. A helical membrane pass occupies residues 399 to 419 (WMTYESVVTGFFPFFLIATVI). At 420–429 (QLFYRGRIWN) the chain is on the extracellular side. A helical transmembrane segment spans residues 430 to 450 (ILLFLLTVQLVGIIKATYACF). Topologically, residues 451–456 (LRGSAE) are cytoplasmic. Residues 457-477 (MIFVSLYALLYMSSLLPAKMF) traverse the membrane as a helical segment. The Extracellular segment spans residues 478 to 494 (AIATINKSGWGTSGRRT). The chain crosses the membrane as a helical span at residues 495–515 (IVVNFVGLLPVSVWAAVLLGG). At 516–530 (LAYTAYSQDLLSDTE) the chain is on the cytoplasmic side. The chain crosses the membrane as a helical span at residues 531–551 (VAFLISGAVLYACYWVALLTL). Over 552 to 574 (YLAMVARRCGKRKEQCGLVFAEV) the chain is Extracellular.

Belongs to the NodC/HAS family. It depends on Mg(2+) as a cofactor. In terms of processing, O-GlcNAcylation increases the hyaluronan synthase activity, HAS3 stability and its plasma membrane residence. The concentration of UDP-GlcNAc controls the level of O-GlcNAc modification.

The protein localises to the cell membrane. It is found in the golgi apparatus membrane. It localises to the golgi apparatus. Its subcellular location is the trans-Golgi network membrane. The protein resides in the cytoplasmic vesicle. It carries out the reaction [hyaluronan](n) + UDP-N-acetyl-alpha-D-glucosamine = N-acetyl-beta-D-glucosaminyl-(1-&gt;4)-[hyaluronan](n) + UDP + H(+). The catalysed reaction is N-acetyl-beta-D-glucosaminyl-(1-&gt;4)-[hyaluronan](n) + UDP-alpha-D-glucuronate = [hyaluronan](n+1) + UDP + H(+). Its pathway is glycan biosynthesis; hyaluronan biosynthesis. Functionally, catalyzes the addition of GlcNAc or GlcUA monosaccharides to the nascent hyaluronan polymer. Therefore, it is essential to hyaluronan synthesis a major component of most extracellular matrices that has a structural role in tissues architectures and regulates cell adhesion, migration and differentiation. This is one of three isoenzymes responsible for cellular hyaluronan synthesis. This Gallus gallus (Chicken) protein is Hyaluronan synthase 3 (HAS3).